We begin with the raw amino-acid sequence, 821 residues long: Elongator complex protein 2 (821 aa).

WD repeat units lie at residues 14 to 53, 54 to 98, 103 to 145, 151 to 193, 198 to 239, 271 to 319, 329 to 368, 374 to 413, 424 to 462, 602 to 641, 656 to 695, 715 to 754, and 769 to 821; these read CANR…DLLN, KHTG…FRAC, GHSG…AECL, GSGF…FQRV, GHED…AAEP, GHEN…GMWV, GNTL…EWRP, GHFN…GSSQ, IHGY…VENF, CHSL…LDTE, VHTR…VAVG, ATAV…DLSS, and GHTM…LSAL.

It belongs to the WD repeat ELP2 family. Component of the elongator complex.

It localises to the cytoplasm. Its subcellular location is the nucleus. The protein operates within tRNA modification; 5-methoxycarbonylmethyl-2-thiouridine-tRNA biosynthesis. Functionally, component of the elongator complex which is required for multiple tRNA modifications, including mcm5U (5-methoxycarbonylmethyl uridine), mcm5s2U (5-methoxycarbonylmethyl-2-thiouridine), and ncm5U (5-carbamoylmethyl uridine). The elongator complex catalyzes the formation of carboxymethyluridine in the wobble base at position 34 in tRNAs. In Danio rerio (Zebrafish), this protein is Elongator complex protein 2 (elp2).